A 176-amino-acid polypeptide reads, in one-letter code: uncharacterized protein (176 aa).

Positions 71–176 (RDDMSSDSDG…YSTDDDEDDY (106 aa)) are disordered. 2 stretches are compositionally biased toward low complexity: residues 77–87 (DSDGPAASPPG) and 100–109 (SYSSSDSSAR). Positions 140-152 (KARRPARKKKRIG) are enriched in basic residues.

This is an uncharacterized protein from Orgyia pseudotsugata multicapsid polyhedrosis virus (OpMNPV).